The following is a 206-amino-acid chain: Two-component response regulator ARR7 (206 aa).

Positions 25–152 (HVLAVDDSIV…DVKRIKQLIM (128 aa)) constitute a Response regulatory domain. A 4-aspartylphosphate modification is found at Asp85. The disordered stretch occupies residues 165–206 (SNKRKLQEDSDTSSSSHDDTSIKDSSCSKRMKSESENLFSLL).

Belongs to the ARR family. Type-A subfamily. In terms of processing, two-component system major event consists of a His-to-Asp phosphorelay between a sensor histidine kinase (HK) and a response regulator (RR). In plants, the His-to-Asp phosphorelay involves an additional intermediate named Histidine-containing phosphotransfer protein (HPt). This multistep phosphorelay consists of a His-Asp-His-Asp sequential transfer of a phosphate group between first a His and an Asp of the HK protein, followed by the transfer to a conserved His of the HPt protein and finally the transfer to an Asp in the receiver domain of the RR protein. Predominantly expressed in roots and young flowers.

Its subcellular location is the nucleus. Its function is as follows. Functions as a response regulator involved in His-to-Asp phosphorelay signal transduction system. Phosphorylation of the Asp residue in the receiver domain activates the ability of the protein to promote the transcription of target genes. Type-A response regulators seem to act as negative regulators of the cytokinin signaling. This Arabidopsis thaliana (Mouse-ear cress) protein is Two-component response regulator ARR7 (ARR7).